Reading from the N-terminus, the 261-residue chain is Syntaxin-7 (261 aa).

Ser2 is modified (N-acetylserine). The Cytoplasmic segment spans residues Ser2–Leu238. Position 4 is a phosphothreonine (Thr4). The residue at position 45 (Ser45) is a Phosphoserine. Positions Glu47 to Lys68 form a coiled coil. Ser75 carries the post-translational modification Phosphoserine. Thr79 is subject to Phosphothreonine. Ser125, Ser126, Ser129, and Ser205 each carry phosphoserine. A disordered region spans residues Val128–Gln148. One can recognise a t-SNARE coiled-coil homology domain in the interval Leu165–Ala227. A helical; Anchor for type IV membrane protein transmembrane segment spans residues Cys239–Leu259. The Vesicular portion of the chain corresponds to Lys260–Gly261.

It belongs to the syntaxin family. Interacts with VPS11, VPS16 and VPS18. Interacts with VPS33A. Forms a SNARE complex with VTI1B, STX8 and VAMP8 which functions in the homotypic fusion of late endosomes. Component of the SNARE complex composed of STX7, STX8, VAMP7 and VTI1B that is required for heterotypic fusion of late endosomes with lysosomes. Interacts with TPC1.

The protein resides in the early endosome membrane. May be involved in protein trafficking from the plasma membrane to the early endosome (EE) as well as in homotypic fusion of endocytic organelles. Mediates the endocytic trafficking from early endosomes to late endosomes and lysosomes. The sequence is that of Syntaxin-7 (Stx7) from Mus musculus (Mouse).